The primary structure comprises 287 residues: Acetylglutamate kinase (287 aa).

Substrate contacts are provided by residues 64-65 (GG), Arg-86, and Asn-181.

It belongs to the acetylglutamate kinase family. ArgB subfamily.

The protein localises to the cytoplasm. The enzyme catalyses N-acetyl-L-glutamate + ATP = N-acetyl-L-glutamyl 5-phosphate + ADP. It participates in amino-acid biosynthesis; L-arginine biosynthesis; N(2)-acetyl-L-ornithine from L-glutamate: step 2/4. Its function is as follows. Catalyzes the ATP-dependent phosphorylation of N-acetyl-L-glutamate. This is Acetylglutamate kinase from Desulforamulus reducens (strain ATCC BAA-1160 / DSM 100696 / MI-1) (Desulfotomaculum reducens).